Reading from the N-terminus, the 348-residue chain is 4-hydroxy-3-methylbut-2-en-1-yl diphosphate synthase (flavodoxin) (348 aa).

4 residues coordinate [4Fe-4S] cluster: cysteine 263, cysteine 266, cysteine 298, and glutamate 305.

Belongs to the IspG family. The cofactor is [4Fe-4S] cluster.

The catalysed reaction is (2E)-4-hydroxy-3-methylbut-2-enyl diphosphate + oxidized [flavodoxin] + H2O + 2 H(+) = 2-C-methyl-D-erythritol 2,4-cyclic diphosphate + reduced [flavodoxin]. The protein operates within isoprenoid biosynthesis; isopentenyl diphosphate biosynthesis via DXP pathway; isopentenyl diphosphate from 1-deoxy-D-xylulose 5-phosphate: step 5/6. In terms of biological role, converts 2C-methyl-D-erythritol 2,4-cyclodiphosphate (ME-2,4cPP) into 1-hydroxy-2-methyl-2-(E)-butenyl 4-diphosphate. The chain is 4-hydroxy-3-methylbut-2-en-1-yl diphosphate synthase (flavodoxin) from Dehalococcoides mccartyi (strain CBDB1).